The sequence spans 120 residues: Large ribosomal subunit protein uL18 (120 aa).

It belongs to the universal ribosomal protein uL18 family. In terms of assembly, part of the 50S ribosomal subunit; part of the 5S rRNA/L5/L18/L25 subcomplex. Contacts the 5S and 23S rRNAs.

In terms of biological role, this is one of the proteins that bind and probably mediate the attachment of the 5S RNA into the large ribosomal subunit, where it forms part of the central protuberance. This Methylocella silvestris (strain DSM 15510 / CIP 108128 / LMG 27833 / NCIMB 13906 / BL2) protein is Large ribosomal subunit protein uL18.